The primary structure comprises 138 residues: Large ribosomal subunit protein uL16 (138 aa).

Residues 1–13 (MLQPARRKYRKEQ) are compositionally biased toward basic residues. The interval 1-22 (MLQPARRKYRKEQKGRNTGVAT) is disordered.

This sequence belongs to the universal ribosomal protein uL16 family. As to quaternary structure, part of the 50S ribosomal subunit.

In terms of biological role, binds 23S rRNA and is also seen to make contacts with the A and possibly P site tRNAs. The polypeptide is Large ribosomal subunit protein uL16 (Polaromonas sp. (strain JS666 / ATCC BAA-500)).